We begin with the raw amino-acid sequence, 2267 residues long: Acetyl-CoA carboxylase 1 (2267 aa).

The region spanning 38–544 (PIHSVLVANN…HTGWLDSRIA (507 aa)) is the Biotin carboxylation domain. The ATP-grasp domain maps to 190–384 (PESCNSIPEE…AAQVVVGMGV (195 aa)). ATP is bound at residue 216-273 (CQVVGYPAMIKASWGGGGKGIRKVHNDDEVRALFKQVQGEVPGSPIFIMKVASQSRHL). Residues E339, E353, and N355 each coordinate Mg(2+). Mn(2+) contacts are provided by E339, E353, and N355. R357 is a catalytic residue. One can recognise a Biotinyl-binding domain in the interval 671–745 (LQKEHDPSKL…QAADLIARLD (75 aa)). K712 is modified (N6-biotinyllysine). Positions 1502 to 1843 (PYKPLDAIDL…YVGGPLPIMK (342 aa)) constitute a CoA carboxyltransferase N-terminal domain. Residues 1502–2163 (PYKPLDAIDL…EDALAKEIRE (662 aa)) are carboxyltransferase. CoA contacts are provided by R1752, K2053, and R2055. In terms of domain architecture, CoA carboxyltransferase C-terminal spans 1847–2163 (PPDRPVTYFP…EDALAKEIRE (317 aa)).

In terms of assembly, homodimer. Mg(2+) serves as cofactor. It depends on Mn(2+) as a cofactor. Requires biotin as cofactor.

The protein localises to the cytoplasm. It is found in the cytosol. The catalysed reaction is hydrogencarbonate + acetyl-CoA + ATP = malonyl-CoA + ADP + phosphate + H(+). It carries out the reaction N(6)-biotinyl-L-lysyl-[protein] + hydrogencarbonate + ATP = N(6)-carboxybiotinyl-L-lysyl-[protein] + ADP + phosphate + H(+). The protein operates within lipid metabolism; malonyl-CoA biosynthesis; malonyl-CoA from acetyl-CoA: step 1/1. Multifunctional enzyme that catalyzes the carboxylation of acetyl-CoA, forming malonyl-CoA, which is used in the plastid for fatty acid synthesis and in the cytosol in various biosynthetic pathways including fatty acid elongation. The chain is Acetyl-CoA carboxylase 1 (ACC1) from Oryza sativa subsp. japonica (Rice).